The sequence spans 304 residues: N-acetyl-D-glucosamine kinase (304 aa).

ATP is bound by residues 4-11 (GFDMGGTK) and 133-140 (GLGGGLVI). Zn(2+) is bound by residues histidine 157, cysteine 177, cysteine 179, and cysteine 184.

This sequence belongs to the ROK (NagC/XylR) family. NagK subfamily.

It catalyses the reaction N-acetyl-D-glucosamine + ATP = N-acetyl-D-glucosamine 6-phosphate + ADP + H(+). It participates in cell wall biogenesis; peptidoglycan recycling. Catalyzes the phosphorylation of N-acetyl-D-glucosamine (GlcNAc) derived from cell-wall degradation, yielding GlcNAc-6-P. The sequence is that of N-acetyl-D-glucosamine kinase from Pectobacterium carotovorum subsp. carotovorum (strain PC1).